Here is a 54-residue protein sequence, read N- to C-terminus: U-myrmicitoxin(01)-Tb5a (54 aa).

The first 26 residues, 1–26, serve as a signal peptide directing secretion; the sequence is MQLSHLLLAFAMIFVMTIMYAPQVQA. Residues 27–38 constitute a propeptide that is removed on maturation; sequence DAWADANADADV.

Belongs to the formicidae venom precursor-01 superfamily. In terms of processing, contains 1 disulfide bond. As to expression, expressed by the venom gland.

Its subcellular location is the secreted. The polypeptide is U-myrmicitoxin(01)-Tb5a (Tetramorium bicarinatum (Tramp ant)).